The chain runs to 314 residues: Methionyl-tRNA formyltransferase (314 aa).

110–113 (SLLP) is a (6S)-5,6,7,8-tetrahydrofolate binding site.

It belongs to the Fmt family.

It catalyses the reaction L-methionyl-tRNA(fMet) + (6R)-10-formyltetrahydrofolate = N-formyl-L-methionyl-tRNA(fMet) + (6S)-5,6,7,8-tetrahydrofolate + H(+). Functionally, attaches a formyl group to the free amino group of methionyl-tRNA(fMet). The formyl group appears to play a dual role in the initiator identity of N-formylmethionyl-tRNA by promoting its recognition by IF2 and preventing the misappropriation of this tRNA by the elongation apparatus. This Lactobacillus johnsonii (strain CNCM I-12250 / La1 / NCC 533) protein is Methionyl-tRNA formyltransferase.